Reading from the N-terminus, the 650-residue chain is Acetoacetyl-coenzyme A synthetase (650 aa).

199–202 (YNGK) contacts CoA. ATP is bound by residues 392-394 (GSP), Asp-504, Arg-519, and Arg-530. Residue Val-546 coordinates Mg(2+). Residue Arg-587 coordinates CoA. Lys-612 is subject to N6-acetyllysine.

It belongs to the ATP-dependent AMP-binding enzyme family. It depends on Mg(2+) as a cofactor. Post-translationally, acetylated. Deacetylation by the SIR2-homolog deacetylase activates the enzyme.

It catalyses the reaction acetoacetate + ATP + CoA = acetoacetyl-CoA + AMP + diphosphate. The protein operates within biopolymer metabolism; poly-(R)-3-hydroxybutanoate degradation. Catalyzes the conversion of acetoacetate into acetoacetyl-CoA. Is involved in poly-3-hydroxybutyrate (PHB) degradation, which allows growth of R.meliloti on PHB cycle intermediates. The polypeptide is Acetoacetyl-coenzyme A synthetase (Rhizobium meliloti (strain 1021) (Ensifer meliloti)).